The following is a 185-amino-acid chain: Anaphase-promoting complex subunit 10 (185 aa).

Threonine 2 carries the post-translational modification N-acetylthreonine. The 184-residue stretch at 2-185 folds into the DOC domain; it reads TTPNKTPPGA…IDFMMYRSIR (184 aa). At lysine 169 the chain carries N6-acetyllysine.

It belongs to the APC10 family. As to quaternary structure, the mammalian APC/C is composed at least of 14 distinct subunits ANAPC1, ANAPC2, CDC27/APC3, ANAPC4, ANAPC5, CDC16/APC6, ANAPC7, CDC23/APC8, ANAPC10, ANAPC11, CDC26/APC12, ANAPC13, ANAPC15 and ANAPC16 that assemble into a complex of at least 19 chains with a combined molecular mass of around 1.2 MDa; APC/C interacts with FZR1 and FBXO5. The C-terminus of APC10 binds to CDC27/APC3. Interacts with PIWIL1; interaction only takes place when PIWIL1 binds piRNA. Interacts with FBXO43; the interaction is direct.

It participates in protein modification; protein ubiquitination. Functionally, component of the anaphase promoting complex/cyclosome (APC/C), a cell cycle-regulated E3 ubiquitin ligase that controls progression through mitosis and the G1 phase of the cell cycle. The APC/C complex acts by mediating ubiquitination and subsequent degradation of target proteins: it mainly mediates the formation of 'Lys-11'-linked polyubiquitin chains and, to a lower extent, the formation of 'Lys-48'- and 'Lys-63'-linked polyubiquitin chains. The APC/C complex catalyzes assembly of branched 'Lys-11'-/'Lys-48'-linked branched ubiquitin chains on target proteins. This is Anaphase-promoting complex subunit 10 (Anapc10) from Mus musculus (Mouse).